Consider the following 594-residue polypeptide: AT-rich interactive domain-containing protein 5A (594 aa).

A disordered region spans residues 1-56 (MAAPVKGNRKQSTEGDALDPPASPKPAGKQNGIQNPISLEDSPEAGGEREEEQERE). An interaction with SOX9 region spans residues 1 to 300 (MAAPVKGNRK…AVHLPESPQS (300 aa)). The residue at position 23 (Ser23) is a Phosphoserine. Residues 55–147 (REEEQAFLVS…LVLPYVRHLK (93 aa)) enclose the ARID domain. Glycyl lysine isopeptide (Lys-Gly) (interchain with G-Cter in ubiquitin) cross-links involve residues Lys85 and Lys94. The tract at residues 146-223 (LKGEDDKPLP…NSTEQQGLAS (78 aa)) is disordered. The segment covering 165–189 (MAKENRGDDGATERPKKAKEERRMD) has biased composition (basic and acidic residues). 2 positions are modified to phosphoserine: Ser256 and Ser289. 2 disordered regions span residues 281 to 331 (RHGA…EAQA) and 426 to 454 (AESP…GAAH). A compositionally biased stretch (polar residues) spans 297–306 (SPQSPKGLTE). Residues Ser438 and Ser463 each carry the phosphoserine modification.

Interacts with SOX9. Interacts with ESR1. Interacts with RORC. In terms of processing, phosphorylated by MAPK14 on serine residues involving a TLR4 signaling pathway upon lipopolysaccharide (LPS) stimulation leading to its ubiquitination and proteasomal degradation. Post-translationally, ubiquitinated leading to proteasomal degradation; involving WWP1 linked to MAPK14-mediated phosphorylation upon LPS stimulation.

Its subcellular location is the nucleus. DNA-binding protein that may regulate transcription and act as a repressor by binding to AT-rich stretches in the promoter region of target genes. May positively regulate chondrocyte-specific transcription such as of COL2A1 in collaboration with SOX9 and positively regulate histone H3 acetylation at chondrocyte-specific genes. May stimulate early-stage chondrocyte differentiation and inhibit later stage differention. Can repress ESR1-mediated transcriptional activation; proposed to act as corepressor for selective nuclear hormone receptors. As an RNA-binding protein, involved in the regulation of inflammatory response by stabilizing selective inflammation-related mRNAs, such as STAT3 and TBX21. Also stabilizes IL6 mRNA. Binds to stem loop structures located in the 3'UTRs of IL6, STAT3 and TBX21 mRNAs; at least for STAT3 prevents binding of ZC3H12A to the mRNA stem loop structure thus inhibiting its degradation activity. Contributes to elevated IL6 levels possibly implicated in autoimmunity processes. IL6-dependent stabilization of STAT3 mRNA may promote differentiation of naive CD4+ T-cells into T-helper Th17 cells. In CD4+ T-cells may also inhibit RORC-induced Th17 cell differentiation independently of IL6 signaling. Stabilization of TBX21 mRNA contributes to elevated interferon-gamma secretion in Th1 cells possibly implicated in the establishment of septic shock. Stabilizes TNFRSF4/OX40 mRNA by binding to the conserved stem loop structure in its 3'UTR; thereby competing with the mRNA-destabilizing functions of RC3H1 and endoribonuclease ZC3H12A. The sequence is that of AT-rich interactive domain-containing protein 5A (ARID5A) from Homo sapiens (Human).